A 961-amino-acid chain; its full sequence is Leucine-rich repeat-containing protein egg-6 (961 aa).

The N-terminal stretch at 1-18 (MRWLTLIAVAHLIAFLSS) is a signal peptide. Residues 19 to 854 (AEITCPRIPE…EQNERHRNIR (836 aa)) lie on the Extracellular side of the membrane. 17 LRR repeats span residues 60–78 (IDELHILNGTDVKIESLPF), 79–101 (NGLRTIAILNSTLQSFSPTAWRH), 103–124 (EATIEHITINGNELKTVPVFGN), 125–148 (LSTLMSMNLNSNQISSIPDKAFNG), 150–172 (SALTQLRLENNAICDFPPKSLDA), 174–197 (KASLVLLDVSGNCLDAIPAQILRN), 199–222 (ANLMYLDLGSNNISEINNFELMNL), 223–245 (PFLRELRVQNNTLRRIHPMAFMN), 247–269 (PQLQYLYLQDNIISTLDGNRLQG), 270–294 (FKNLEVLDVSNNALYALPSLKDLPN), 305–316 (ITKIETLAFSNN), 317–339 (PNLQLISVQNNNIVQISRNSFES), 340–363 (LDKLVVLLVGNNSLAKIERGMFDG), 364–387 (MKNLQQLSIRNNTLTALDASSFAQ), 388–411 (LAHLTTLDLGHNKIHDIEEGTFDK), 413–435 (SKLFWLDLSNNKISGFKTSVFKK), and 437–455 (ISNILLDGNQLICDESFNE). The helical transmembrane segment at 855 to 875 (IITAIALAFVGAVTVVVIIFF) threads the bilayer. At 876–961 (VNYTKKQRRL…PQAVSHRSRH (86 aa)) the chain is on the cytoplasmic side. The tract at residues 890-943 (VYRSSPSSSGSSGQNAANESGRSSAAPSPIRPPLMNIPKTPNNRTMESTFGQPQ) is disordered. Positions 893-902 (SSPSSSGSSG) are enriched in low complexity. Positions 928–943 (KTPNNRTMESTFGQPQ) are enriched in polar residues.

In terms of tissue distribution, in L1 larvae, expressed in a subset of epithelial cells including epidermal, vulval and rectal cells and the excretory duct and pore. Also detected in some neurons. Absent from internal epithelia such as the gut and pharyngeal tubes.

Its subcellular location is the apical cell membrane. Its function is as follows. Required for apical extracellular matrix organization and epithelial junction maintenance. The chain is Leucine-rich repeat-containing protein egg-6 from Caenorhabditis elegans.